A 105-amino-acid polypeptide reads, in one-letter code: Urease subunit beta (105 aa).

It belongs to the urease beta subunit family. Heterotrimer of UreA (gamma), UreB (beta) and UreC (alpha) subunits. Three heterotrimers associate to form the active enzyme.

Its subcellular location is the cytoplasm. It catalyses the reaction urea + 2 H2O + H(+) = hydrogencarbonate + 2 NH4(+). It functions in the pathway nitrogen metabolism; urea degradation; CO(2) and NH(3) from urea (urease route): step 1/1. This chain is Urease subunit beta, found in Shewanella halifaxensis (strain HAW-EB4).